Consider the following 543-residue polypeptide: MVVIRAPLKELEGRYGREIVDLILRYSSIIGYSVDHDEELKIEFNPDRPDLFSFPTLMKQIKIFFYGEVEIRKPQIRDDAVKVTVSKGVRDIRPYFSALIAEGSSIGVHFDELINYQEILHASIGKDRSKMAIGIHDLEKTGDSIHYTTVSRNQRMQTYDGMEGTVDWIIKNHEKGIAYGRLLPGTGRSVAITDNEGNILSLPPIVNSYRSRIDEGTKKFFVDITGTDLNSVKFAHHLMSNFFSSLKYRIRTPSIDGLPSRETEIIRAFDFRIMRPARRSIERYLGEKMDSEETITHLRRMGYVAEPGYPEIAVYVPGYRVDVMGEADIIEDILKSKGIENIEEKQIFIGKFGEPLFMNKVKDLARDTMIGLGFQEVMTFVLSPASYLQEYTGGVRIQNPKSEDYSVIRDKIYPDLLDLIARNKKHSLPQRIFEIGDKIVGGKQRTALSCVIADTRSEFSTAKSYMQGFLARFTSENPVIVPQMIYGSIDGRSGSIKIGEKIIGVIGEIHPAFLERFSLAVPVSFFEIDLDEIFIANMDHLGL.

Residues 269 to 344 (FDFRIMRPAR…KSKGIENIEE (76 aa)) enclose the B5 domain. The Mg(2+) site is built by aspartate 322, aspartate 328, glutamate 331, and aspartate 332.

This sequence belongs to the phenylalanyl-tRNA synthetase beta subunit family. Type 2 subfamily. Tetramer of two alpha and two beta subunits. Requires Mg(2+) as cofactor.

The protein localises to the cytoplasm. The enzyme catalyses tRNA(Phe) + L-phenylalanine + ATP = L-phenylalanyl-tRNA(Phe) + AMP + diphosphate + H(+). The sequence is that of Phenylalanine--tRNA ligase beta subunit from Thermoplasma acidophilum (strain ATCC 25905 / DSM 1728 / JCM 9062 / NBRC 15155 / AMRC-C165).